The following is an 85-amino-acid chain: Putative membrane protein insertion efficiency factor (85 aa).

Belongs to the UPF0161 family.

It is found in the cell inner membrane. Its function is as follows. Could be involved in insertion of integral membrane proteins into the membrane. This chain is Putative membrane protein insertion efficiency factor, found in Escherichia coli O157:H7.